Consider the following 201-residue polypeptide: dTTP/UTP pyrophosphatase (201 aa).

D80 serves as the catalytic Proton acceptor.

This sequence belongs to the Maf family. YhdE subfamily. Requires a divalent metal cation as cofactor.

The protein localises to the cytoplasm. The enzyme catalyses dTTP + H2O = dTMP + diphosphate + H(+). The catalysed reaction is UTP + H2O = UMP + diphosphate + H(+). Functionally, nucleoside triphosphate pyrophosphatase that hydrolyzes dTTP and UTP. May have a dual role in cell division arrest and in preventing the incorporation of modified nucleotides into cellular nucleic acids. In Novosphingobium aromaticivorans (strain ATCC 700278 / DSM 12444 / CCUG 56034 / CIP 105152 / NBRC 16084 / F199), this protein is dTTP/UTP pyrophosphatase.